A 200-amino-acid chain; its full sequence is MPIPMVIESTGRAERAYDIYSRLLKDRIILLGTPVDDNVASLICAQLLFLESENPEKEIYLYINSPGGVVTAGLAIYDTMQYISAPVATLCMGQAASMGAFLLAAGQPGMRFALPNSRIMIHQPMGGAQGQATDIDIQAREILRLKDRLNEILSRHTGQPLEKIVEHTDRDYFMGPENAKNFGIIDRILTSRKDVEKDGK.

Residue S97 is the Nucleophile of the active site. H122 is an active-site residue.

It belongs to the peptidase S14 family. In terms of assembly, fourteen ClpP subunits assemble into 2 heptameric rings which stack back to back to give a disk-like structure with a central cavity, resembling the structure of eukaryotic proteasomes.

The protein resides in the cytoplasm. It catalyses the reaction Hydrolysis of proteins to small peptides in the presence of ATP and magnesium. alpha-casein is the usual test substrate. In the absence of ATP, only oligopeptides shorter than five residues are hydrolyzed (such as succinyl-Leu-Tyr-|-NHMec, and Leu-Tyr-Leu-|-Tyr-Trp, in which cleavage of the -Tyr-|-Leu- and -Tyr-|-Trp bonds also occurs).. In terms of biological role, cleaves peptides in various proteins in a process that requires ATP hydrolysis. Has a chymotrypsin-like activity. Plays a major role in the degradation of misfolded proteins. In Oleidesulfovibrio alaskensis (strain ATCC BAA-1058 / DSM 17464 / G20) (Desulfovibrio alaskensis), this protein is ATP-dependent Clp protease proteolytic subunit.